Reading from the N-terminus, the 580-residue chain is 2-succinyl-5-enolpyruvyl-6-hydroxy-3-cyclohexene-1-carboxylate synthase (580 aa).

It belongs to the TPP enzyme family. MenD subfamily. In terms of assembly, homodimer. Mg(2+) serves as cofactor. Requires Mn(2+) as cofactor. Thiamine diphosphate is required as a cofactor.

It catalyses the reaction isochorismate + 2-oxoglutarate + H(+) = 5-enolpyruvoyl-6-hydroxy-2-succinyl-cyclohex-3-ene-1-carboxylate + CO2. The protein operates within quinol/quinone metabolism; 1,4-dihydroxy-2-naphthoate biosynthesis; 1,4-dihydroxy-2-naphthoate from chorismate: step 2/7. Its pathway is quinol/quinone metabolism; menaquinone biosynthesis. In terms of biological role, catalyzes the thiamine diphosphate-dependent decarboxylation of 2-oxoglutarate and the subsequent addition of the resulting succinic semialdehyde-thiamine pyrophosphate anion to isochorismate to yield 2-succinyl-5-enolpyruvyl-6-hydroxy-3-cyclohexene-1-carboxylate (SEPHCHC). The protein is 2-succinyl-5-enolpyruvyl-6-hydroxy-3-cyclohexene-1-carboxylate synthase of Listeria welshimeri serovar 6b (strain ATCC 35897 / DSM 20650 / CCUG 15529 / CIP 8149 / NCTC 11857 / SLCC 5334 / V8).